A 22-amino-acid polypeptide reads, in one-letter code: Lantibiotic mutacin B-Ny266 (22 aa).

Positions 3 to 7 form a cross-link, lanthionine (Ser-Cys); sequence SWSFC. Ser5 is modified (2,3-didehydroalanine (Ser)). The beta-methyllanthionine (Thr-Cys) cross-link spans 8-11; sequence TPGC. Position 14 is a 2,3-didehydrobutyrine (Thr14). The lanthionine (Ser-Cys) cross-link spans 16-21; that stretch reads SFNSYC. The S-(2-aminovinyl)-D-cysteine (Ser-Cys) cross-link spans 19 to 22; the sequence is SYCC.

Maturation of lantibiotics involves the enzymatic conversion of Thr, and Ser into dehydrated AA and the formation of thioether bonds with cysteine. The C-terminal lanthionine undergoes decarboxylation. This is followed by membrane translocation and cleavage of the modified precursor. Post-translationally, it is not established whether the 2,3-didehydrobutyrine is the E- or Z-isomer.

Its function is as follows. Lanthionine-containing peptide antibiotic (lantibiotic) active on Gram-positive bacteria. The bactericidal activity of lantibiotics is based on depolarization of energized bacterial cytoplasmic membranes, initiated by the formation of aqueous transmembrane pores. The sequence is that of Lantibiotic mutacin B-Ny266 from Streptococcus mutans.